The sequence spans 450 residues: MRIPVDASTSRRFTPPSTALSPGKMSEALPLGAPDGGAALASKLRSGDRSMVEVLADHPGELVRTDSPNFLCSVLPTHWRCNKTLPIAFKVVALGDVPDGTLVTVMAGNDENYSAELRNATAAMKNQVARFNDLRFVGRSGRGKSFTLTITVFTNPPQVATYHRAIKITVDGPREPRRHRQKLDDQTKPGSLSFSERLSELEQLRRTAMRVSPHHPAPTPNPRASLNHSTAFNPQPQSQMQDARQIQPSPPWSYDQSYQYLGSITSSVHPATPISPGRASGMTSLSAELSSRLSTAPDLTAFGDPRQFPTLPSISDPRMHYPGAFTYSPPVTSGIGIGMSAMSSTSRYHTYLPPPYPGSSQAQAGPFQTGSPSYHLYYGTSAGSYQFSMVGGERSPPRILPPCTNASTGAALLNPSLPSQSDVVETEGSHSNSPTNMPPARLEEAVWRPY.

Residues 1–25 (MRIPVDASTSRRFTPPSTALSPGKM) are disordered. Positions 7 to 20 (ASTSRRFTPPSTAL) are enriched in polar residues. Residue Thr-14 is modified to Phosphothreonine. At Ser-21 the chain carries Phosphoserine. An N6-acetyllysine mark is found at Lys-24 and Lys-43. The Runt domain maps to 50 to 178 (SMVEVLADHP…TVDGPREPRR (129 aa)). The segment at 80–84 (RCNKT) is interaction with DNA. Chloride is bound by residues Asn-112, Glu-116, Arg-139, and Val-170. Interaction with DNA regions lie at residues 135-143 (RFVGRSGRG) and 168-177 (ITVDGPREPR). Disordered regions lie at residues 170–195 (VDGPREPRRHRQKLDDQTKPGSLSFS) and 209–252 (MRVS…SPPW). A phosphoserine mark is found at Ser-193 and Ser-212. Residues 222-247 (PRASLNHSTAFNPQPQSQMQDARQIQ) are compositionally biased toward polar residues. A Phosphoserine; by HIPK2 modification is found at Ser-249. 2 positions are modified to phosphoserine: Ser-266 and Ser-267. Position 272 is a phosphothreonine; by HIPK2 (Thr-272). Ser-275 bears the Phosphoserine; by HIPK2 mark. The interval 290 to 369 (SSRLSTAPDL…SQAQAGPFQT (80 aa)) is interaction with KAT6A. Residue Thr-295 is modified to Phosphothreonine. An interaction with KAT6B region spans residues 306-398 (RQFPTLPSIS…MVGGERSPPR (93 aa)). Residues 360–400 (SQAQAGPFQTGSPSYHLYYGTSAGSYQFSMVGGERSPPRIL) form an interaction with FOXP3 region. The segment at 410 to 450 (AALLNPSLPSQSDVVETEGSHSNSPTNMPPARLEEAVWRPY) is disordered. Residues 416–435 (SLPSQSDVVETEGSHSNSPT) are compositionally biased toward polar residues. Ser-433 carries the phosphoserine modification. The span at 441-450 (RLEEAVWRPY) shows a compositional bias: basic and acidic residues.

In terms of assembly, heterodimer with CBFB. RUNX1 binds DNA as a monomer and through the Runt domain. DNA-binding is increased by heterodimerization. Interacts with TLE1 and ALYREF/THOC4. Interacts with ELF1, ELF2 and SPI1. Interacts via its Runt domain with the ELF4 N-terminal region. Interaction with ELF2 isoform 2 (NERF-1a) may act to repress RUNX1-mediated transactivation. Interacts with KAT6A and KAT6B. Interacts with SUV39H1, leading to abrogation of transactivating and DNA-binding properties of RUNX1. Interacts with YAP1 and HIPK2. Interaction with CDK6 prevents myeloid differentiation, reducing its transcription transactivation activity. Found in a complex with PRMT5, RUNX1 and CBFB. Interacts with FOXP3. Interacts with TBX21. Interacts with DPF2. In terms of processing, phosphorylated in its C-terminus upon IL-6 treatment. Phosphorylation enhances interaction with KAT6A. Post-translationally, methylated. Phosphorylated in Ser-249 Thr-272 and Ser-275 by HIPK2 when associated with CBFB and DNA. This phosphorylation promotes subsequent EP300 phosphorylation. In terms of tissue distribution, expressed in skeletal muscle.

The protein localises to the nucleus. In terms of biological role, CBF binds to the core site, 5'-PYGPYGGT-3', of a number of enhancers and promoters, including murine leukemia virus, polyomavirus enhancer, T-cell receptor enhancers, LCK, IL-3 and GM-CSF promoters. The alpha subunit binds DNA and appears to have a role in the development of normal hematopoiesis. Isoform AML-1L interferes with the transactivation activity of RUNX1. Acts synergistically with ELF4 to transactivate the IL-3 promoter and with ELF2 to transactivate the BLK promoter. Inhibits KAT6B-dependent transcriptional activation. Controls the anergy and suppressive function of regulatory T-cells (Treg) by associating with FOXP3. Activates the expression of IL2 and IFNG and down-regulates the expression of TNFRSF18, IL2RA and CTLA4, in conventional T-cells. Positively regulates the expression of RORC in T-helper 17 cells. This Rattus norvegicus (Rat) protein is Runt-related transcription factor 1 (Runx1).